A 500-amino-acid chain; its full sequence is FAD-linked oxidoreductase easE (500 aa).

One can recognise an FAD-binding PCMH-type domain in the interval 37-220 (QGRIPLFTVG…TRATMRVFPD (184 aa)).

The protein belongs to the oxygen-dependent FAD-linked oxidoreductase family. FAD is required as a cofactor.

It participates in alkaloid biosynthesis; ergot alkaloid biosynthesis. FAD-linked oxidoreductase; part of the gene cluster that mediates the biosynthesis of fungal ergot alkaloid. DmaW catalyzes the first step of ergot alkaloid biosynthesis by condensing dimethylallyl diphosphate (DMAP) and tryptophan to form 4-dimethylallyl-L-tryptophan. The second step is catalyzed by the methyltransferase easF that methylates 4-dimethylallyl-L-tryptophan in the presence of S-adenosyl-L-methionine, resulting in the formation of 4-dimethylallyl-L-abrine. The catalase easC and the FAD-dependent oxidoreductase easE then transform 4-dimethylallyl-L-abrine to chanoclavine-I which is further oxidized by easD in the presence of NAD(+), resulting in the formation of chanoclavine-I aldehyde. Chanoclavine-I aldehyde is the precursor of ergoamides and ergopeptines in Clavicipitaceae, and clavine-type alcaloids such as fumiclavine in Trichocomaceae. However, the metabolites downstream of chanoclavine-I aldehyde in Arthrodermataceae have not been identified yet. The protein is FAD-linked oxidoreductase easE of Arthroderma benhamiae (strain ATCC MYA-4681 / CBS 112371) (Trichophyton mentagrophytes).